Consider the following 272-residue polypeptide: Imidazole glycerol phosphate synthase subunit HisF (272 aa).

Residues Asp-11 and Asp-130 contribute to the active site.

The protein belongs to the HisA/HisF family. As to quaternary structure, heterodimer of HisH and HisF.

The protein resides in the cytoplasm. The catalysed reaction is 5-[(5-phospho-1-deoxy-D-ribulos-1-ylimino)methylamino]-1-(5-phospho-beta-D-ribosyl)imidazole-4-carboxamide + L-glutamine = D-erythro-1-(imidazol-4-yl)glycerol 3-phosphate + 5-amino-1-(5-phospho-beta-D-ribosyl)imidazole-4-carboxamide + L-glutamate + H(+). Its pathway is amino-acid biosynthesis; L-histidine biosynthesis; L-histidine from 5-phospho-alpha-D-ribose 1-diphosphate: step 5/9. In terms of biological role, IGPS catalyzes the conversion of PRFAR and glutamine to IGP, AICAR and glutamate. The HisF subunit catalyzes the cyclization activity that produces IGP and AICAR from PRFAR using the ammonia provided by the HisH subunit. The chain is Imidazole glycerol phosphate synthase subunit HisF from Methanococcus maripaludis (strain C7 / ATCC BAA-1331).